The sequence spans 186 residues: ADP-ribosylation factor-like protein 8B (186 aa).

The segment at residues 1–19 (MLALISRLLDWFRSLFWKE) is an intramembrane region (note=Mediates targeting to membranes). GTP is bound by residues 29–35 (QYSGKTT), 71–75 (DIGGQ), and 130–133 (NKRD). Lys141 is covalently cross-linked (Glycyl lysine isopeptide (Lys-Gly) (interchain with G-Cter in ubiquitin)).

This sequence belongs to the small GTPase superfamily. Arf family. Interacts with tubulin. Interacts with BORCS5; recruits ARL8B to lysosomes. Interacts with VPS41; the interaction mediates the recruitment of the HOPS complex to lysosomes. Interacts (GTP-bound form) with PLEKHM2 (via RUN domain); the interaction is required to recruit the motor protein kinesin-1 on lysosomes. Interacts (GTP-bound form) with PLEKHM1 (via RUN domain); the interaction is required for PLEKHM1 localization to lysosomes and for ARL8B function in delivery and degradation of endocytic and autophagic cargo in lysosomes. PLEKHM1 and PLEKHM2 compete for interaction with ARL8B. Interacts (GTP-bound form) with RUFY1; the interaction is required for RUFY1 endosomal location. When GTP-bound, interacts with RUFY3 and RUFY4, but not with RUFY1, nor RUFY2. Post-translationally, ubiquitinated at Lys-141 by RNF167, leading to its degradation.

Its subcellular location is the late endosome membrane. The protein localises to the lysosome membrane. The protein resides in the cytoplasm. It localises to the cytoskeleton. It is found in the spindle. Its subcellular location is the cell projection. The protein localises to the axon. The protein resides in the synapse. It localises to the cytolytic granule membrane. It is found in the early endosome membrane. The catalysed reaction is GTP + H2O = GDP + phosphate + H(+). Its function is as follows. Small GTPase which cycles between active GTP-bound and inactive GDP-bound states. In its active state, binds to a variety of effector proteins playing a key role in the regulation of lysosomal positioning which is important for nutrient sensing, natural killer cell-mediated cytotoxicity and antigen presentation. Along with its effectors, orchestrates lysosomal transport and fusion. Localizes specifically to lysosomal membranes and mediates anterograde lysosomal motility by recruiting PLEKHM2, which in turn recruits the motor protein kinesin-1 on lysosomes. Required for lysosomal and cytolytic granule exocytosis. Critical factor involved in NK cell-mediated cytotoxicity. Drives the polarization of cytolytic granules and microtubule-organizing centers (MTOCs) toward the immune synapse between effector NK lymphocytes and target cells. In neurons, mediates the anterograde axonal long-range transport of presynaptic lysosome-related vesicles required for presynaptic biogenesis and synaptic function. Also acts as a regulator of endosome to lysosome trafficking pathways of special significance for host defense. Recruits RUFY1 onto early endosomes regulating endosomes to trans-Golgi network proteins retrieval. Regulates cargo trafficking to lysosomes by binding to PLEKHM1 and recruiting the HOPS subunit VPS41, resulting in functional assembly of the HOPS complex on lysosomal membranes. Plays an important role in cargo delivery to lysosomes for antigen presentation and microbial killing. Directs the intersection of CD1d with lipid antigens in lysosomes, and plays a role in intersecting phagosomes with lysosomes to generate phagolysosomes that kill microbes. Involved in the process of MHC II presentation. Regulates the delivery of antigens to lysosomes and the formation of MHC II-peptide complexes through the recruitment of the HOPS complex to lysosomes allowing the fusion of late endosomes to lysosomes. May play a role in chromosome segregation. The protein is ADP-ribosylation factor-like protein 8B (ARL8B) of Bos taurus (Bovine).